Here is a 336-residue protein sequence, read N- to C-terminus: Coproporphyrin III ferrochelatase (336 aa).

Positions 52 and 116 each coordinate Fe-coproporphyrin III. Residues His172 and Glu255 each coordinate Fe(2+).

The protein belongs to the ferrochelatase family.

It is found in the cytoplasm. The catalysed reaction is Fe-coproporphyrin III + 2 H(+) = coproporphyrin III + Fe(2+). The protein operates within porphyrin-containing compound metabolism; protoheme biosynthesis. In terms of biological role, involved in coproporphyrin-dependent heme b biosynthesis. Catalyzes the insertion of ferrous iron into coproporphyrin III to form Fe-coproporphyrin III. This chain is Coproporphyrin III ferrochelatase, found in Mycobacterium avium (strain 104).